We begin with the raw amino-acid sequence, 353 residues long: Ribosome biogenesis protein BRX1 homolog (353 aa).

The disordered stretch occupies residues 1–50; the sequence is MAATKRKRRGGLEVQAKKPKRSSKDAGQPAKQADVAKEAEEENRDRIPGP. A compositionally biased stretch (basic and acidic residues) spans 34 to 47; it reads DVAKEAEEENRDRI. The Brix domain occupies 60–249; it reads ERILIFSSRG…LIKIFQGSFG (190 aa). K160 is covalently cross-linked (Glycyl lysine isopeptide (Lys-Gly) (interchain with G-Cter in SUMO2)). At S261 the chain carries Phosphoserine. An N6-acetyllysine modification is found at K276. Glycyl lysine isopeptide (Lys-Gly) (interchain with G-Cter in SUMO2) cross-links involve residues K314 and K322. A compositionally biased stretch (basic residues) spans 334–344; the sequence is RRIYKRHRKLQ. A disordered region spans residues 334-353; the sequence is RRIYKRHRKLQQKMSRGSAK.

This sequence belongs to the BRX1 family.

It is found in the nucleus. The protein localises to the nucleolus. Its function is as follows. Required for biogenesis of the 60S ribosomal subunit. In Mus musculus (Mouse), this protein is Ribosome biogenesis protein BRX1 homolog (Brix1).